A 256-amino-acid chain; its full sequence is uncharacterized protein (256 aa).

7 helical membrane passes run 32 to 52 (ILASIFIGFGITAASKTGSYF), 59 to 79 (FAFPAAAVTFGAAILMIAYGG), 112 to 132 (YAGNLIGAILFAILISATGLF), 156 to 176 (LFFRGMLCNWLVCLAFFIPMS), 184 to 204 (LFTMMLFVFCFFISGFEHSIA), 207 to 227 (CTFAISLLIEHPDTVTLMGAV), and 230 to 250 (LIPVTLGNLTAGIVMMGWMYY).

Belongs to the FNT transporter (TC 1.A.16) family.

It localises to the cell membrane. This is an uncharacterized protein from Bacillus subtilis (strain 168).